A 154-amino-acid polypeptide reads, in one-letter code: MGLSEGEWQLVLXXXXKVEADLAGHGQDVLIRLFKGHPETLEKFDKFKHLKTXXXMKASEDLKKHGNTVLTALGGILKKKGHHEAELKPLAQSHATKHKIPIKYLXXXXEAIIHVLHSRHPAEFGADAQGAMNKALELFRKDIAAKYKELGFHG.

Positions 2 to 148 (GLSEGEWQLV…FRKDIAAKYK (147 aa)) constitute a Globin domain. S4 is modified (phosphoserine). A nitrite-binding site is contributed by H65. H65 provides a ligand contact to O2. At T68 the chain carries Phosphothreonine. Heme b is bound at residue H94.

As to quaternary structure, monomer.

Its subcellular location is the cytoplasm. The protein resides in the sarcoplasm. It catalyses the reaction Fe(III)-heme b-[protein] + nitric oxide + H2O = Fe(II)-heme b-[protein] + nitrite + 2 H(+). The enzyme catalyses H2O2 + AH2 = A + 2 H2O. Functionally, monomeric heme protein which primary function is to store oxygen and facilitate its diffusion within muscle tissues. Reversibly binds oxygen through a pentacoordinated heme iron and enables its timely and efficient release as needed during periods of heightened demand. Depending on the oxidative conditions of tissues and cells, and in addition to its ability to bind oxygen, it also has a nitrite reductase activity whereby it regulates the production of bioactive nitric oxide. Under stress conditions, like hypoxia and anoxia, it also protects cells against reactive oxygen species thanks to its pseudoperoxidase activity. The protein is Myoglobin (MB) of Delphinapterus leucas (Beluga whale).